The following is a 236-amino-acid chain: 7-cyano-7-deazaguanine synthase 2 (236 aa).

11–21 is a binding site for ATP; the sequence is FSGGQDSATCL. The Zn(2+) site is built by Cys-199, Cys-214, Cys-217, and Cys-220.

The protein belongs to the QueC family. Zn(2+) is required as a cofactor.

It catalyses the reaction 7-carboxy-7-deazaguanine + NH4(+) + ATP = 7-cyano-7-deazaguanine + ADP + phosphate + H2O + H(+). Its pathway is purine metabolism; 7-cyano-7-deazaguanine biosynthesis. Catalyzes the ATP-dependent conversion of 7-carboxy-7-deazaguanine (CDG) to 7-cyano-7-deazaguanine (preQ(0)). The polypeptide is 7-cyano-7-deazaguanine synthase 2 (Sphingopyxis alaskensis (strain DSM 13593 / LMG 18877 / RB2256) (Sphingomonas alaskensis)).